Consider the following 441-residue polypeptide: Ribulose bisphosphate carboxylase large chain (441 aa).

Lysine 5 is subject to N6,N6,N6-trimethyllysine. Substrate contacts are provided by asparagine 114 and threonine 164. The active-site Proton acceptor is lysine 166. Lysine 168 contacts substrate. Residues lysine 192, aspartate 194, and glutamate 195 each coordinate Mg(2+). Lysine 192 carries the post-translational modification N6-carboxylysine. Histidine 285 serves as the catalytic Proton acceptor. Substrate-binding residues include arginine 286, histidine 318, and serine 370.

The protein belongs to the RuBisCO large chain family. Type I subfamily. In terms of assembly, heterohexadecamer of 8 large chains and 8 small chains; disulfide-linked. The disulfide link is formed within the large subunit homodimers. It depends on Mg(2+) as a cofactor. Post-translationally, the disulfide bond which can form in the large chain dimeric partners within the hexadecamer appears to be associated with oxidative stress and protein turnover.

The protein localises to the plastid. It localises to the chloroplast. The catalysed reaction is 2 (2R)-3-phosphoglycerate + 2 H(+) = D-ribulose 1,5-bisphosphate + CO2 + H2O. It catalyses the reaction D-ribulose 1,5-bisphosphate + O2 = 2-phosphoglycolate + (2R)-3-phosphoglycerate + 2 H(+). In terms of biological role, ruBisCO catalyzes two reactions: the carboxylation of D-ribulose 1,5-bisphosphate, the primary event in carbon dioxide fixation, as well as the oxidative fragmentation of the pentose substrate in the photorespiration process. Both reactions occur simultaneously and in competition at the same active site. This chain is Ribulose bisphosphate carboxylase large chain, found in Glycyrrhiza echinata (Licorice).